The sequence spans 382 residues: MSEEQLNKHTAPGHAKPRVAVLFGGRSSEHAVSCVTAAGVLGAIDYDKYDVIPIGIAKTGQWVLVSGDTRQWSLSASSLPEVSPSARTVTLAEIGGEHQLIVASPNEVPQELGAVDVVFPLLHGPFGEDGTIQGLLELSDTRYVGAGVLASAVGMDKHYMKVVFEAAGLQVGPYIAVTDRQWLTDPEAIRKRVDRLGYPVFVKPARAGSSMGISKVDSLEGLDAAIAAAREHDLKLVIEAGIVGREIECAVLEGRGTEPPRTSMPGEIAVAPGEHEFYDFNAKYVEDDAASLSCPADLPDEAIARVRELAAAAFDAVGAEGLSRVDFFYTPDGELIINEINTMPGFTPKSMYPQMWAASGLGYAELIDELIYLALNRKTGLR.

In terms of domain architecture, ATP-grasp spans 161–372; the sequence is KVVFEAAGLQ…YAELIDELIY (212 aa). 193 to 248 lines the ATP pocket; that stretch reads VDRLGYPVFVKPARAGSSMGISKVDSLEGLDAAIAAAREHDLKLVIEAGIVGREIE. 3 residues coordinate Mg(2+): aspartate 326, glutamate 339, and asparagine 341.

Belongs to the D-alanine--D-alanine ligase family. Mg(2+) is required as a cofactor. Mn(2+) serves as cofactor.

Its subcellular location is the cytoplasm. The enzyme catalyses 2 D-alanine + ATP = D-alanyl-D-alanine + ADP + phosphate + H(+). Its pathway is cell wall biogenesis; peptidoglycan biosynthesis. Its function is as follows. Cell wall formation. The sequence is that of D-alanine--D-alanine ligase from Arthrobacter sp. (strain FB24).